A 329-amino-acid chain; its full sequence is tRNA-modifying protein YgfZ (329 aa).

Folate is bound by residues W28 and W188.

Belongs to the tRNA-modifying YgfZ family.

Its subcellular location is the cytoplasm. Folate-binding protein involved in regulating the level of ATP-DnaA and in the modification of some tRNAs. It is probably a key factor in regulatory networks that act via tRNA modification, such as initiation of chromosomal replication. The polypeptide is tRNA-modifying protein YgfZ (Photorhabdus laumondii subsp. laumondii (strain DSM 15139 / CIP 105565 / TT01) (Photorhabdus luminescens subsp. laumondii)).